The sequence spans 387 residues: ATP-dependent Clp protease proteolytic subunit-related protein 1, chloroplastic (387 aa).

Residues 1–41 constitute a chloroplast transit peptide; the sequence is MATALVSPLTSQLNHEAVCSKFVLPKSPFMSGSKLFSSNMP. Residues 355–365 show a composition bias toward basic and acidic residues; that stretch reads QDSSFEKRDYD. Residues 355-387 form a disordered region; the sequence is QDSSFEKRDYDGTLAQRAMRPGGGSPAAPAGLR.

This sequence belongs to the peptidase S14 family. In terms of assembly, component of the chloroplastic Clp protease core complex which consist of at least 16 proteins: CLPP4 (3 copies), CLPP5 (3 copies), CLPR4 (2 copies), ClpP1 (1 copy), CLPP6 (1 copy), CLPR2 (1 copy), CLPT1 (1 copy), CLPT2 (1 copy) and 3 copies of CLPP3 and/or CLPR1 and/or CLPR3. The core complex is organized in two heptameric rings, one containing CLPP3,4,5,6 in a 1:2:3:1 ratio and the other CLPP1 and CLPR1,2,3,4 in a 3:1:1:1:1 ratio.

Its subcellular location is the plastid. It localises to the chloroplast stroma. Functionally, required for chloroplast development and differentiation. This Arabidopsis thaliana (Mouse-ear cress) protein is ATP-dependent Clp protease proteolytic subunit-related protein 1, chloroplastic.